The primary structure comprises 131 residues: Small ribosomal subunit protein eS8 (131 aa).

Residues 15–36 (PSGGKKGRVRKTKKKALGGGPP) are disordered. Residues 17-30 (GGKKGRVRKTKKKA) are compositionally biased toward basic residues.

Belongs to the eukaryotic ribosomal protein eS8 family. Part of the 30S ribosomal subunit.

The polypeptide is Small ribosomal subunit protein eS8 (Pyrobaculum calidifontis (strain DSM 21063 / JCM 11548 / VA1)).